The primary structure comprises 142 residues: Hemoglobin subunit alpha (142 aa).

Position 1 is an N-acetylserine (serine 1). Residues 1-142 (SLSDKDKAAV…LSLALAEKYR (142 aa)) enclose the Globin domain. Heme b-binding residues include histidine 59 and histidine 88.

Belongs to the globin family. Heterotetramer of two alpha chains and two beta chains. In terms of tissue distribution, red blood cells.

Involved in oxygen transport from gills to the various peripheral tissues. The chain is Hemoglobin subunit alpha from Lycodes reticulatus (Arctic eelpout).